The following is a 318-amino-acid chain: Formimidoylglutamase (318 aa).

Residues His-124, Asp-153, His-155, Asp-157, Cys-241, and Asp-243 each coordinate Mn(2+).

Belongs to the arginase family. Mn(2+) serves as cofactor.

It carries out the reaction N-formimidoyl-L-glutamate + H2O = formamide + L-glutamate. The protein operates within amino-acid degradation; L-histidine degradation into L-glutamate; L-glutamate from N-formimidoyl-L-glutamate (hydrolase route): step 1/1. In terms of biological role, catalyzes the conversion of N-formimidoyl-L-glutamate to L-glutamate and formamide. The chain is Formimidoylglutamase from Fusobacterium nucleatum subsp. nucleatum (strain ATCC 25586 / DSM 15643 / BCRC 10681 / CIP 101130 / JCM 8532 / KCTC 2640 / LMG 13131 / VPI 4355).